The following is a 403-amino-acid chain: Alkaline protease 1 (403 aa).

The first 21 residues, Met1–Ala21, serve as a signal peptide directing secretion. Residues Pro22–Thr125 constitute a propeptide that is removed on maturation. An Inhibitor I9 domain is found at Lys36–Ile120. The Peptidase S8 domain maps to Pro130–Ala403. Residues Asp162 and His193 each act as charge relay system in the active site. N-linked (GlcNAc...) asparagine glycosylation is found at Asn253 and Asn307. Ser349 serves as the catalytic Charge relay system.

Belongs to the peptidase S8 family.

The protein localises to the secreted. The catalysed reaction is Hydrolysis of proteins with broad specificity, and of Bz-Arg-OEt &gt; Ac-Tyr-OEt. Does not hydrolyze peptide amides.. In terms of biological role, secreted alkaline protease that allows assimilation of proteinaceous substrates. This Neosartorya fischeri (strain ATCC 1020 / DSM 3700 / CBS 544.65 / FGSC A1164 / JCM 1740 / NRRL 181 / WB 181) (Aspergillus fischerianus) protein is Alkaline protease 1 (alp1).